A 65-amino-acid polypeptide reads, in one-letter code: U11-theraphotoxin-Cg1a (65 aa).

Residues 1-21 (MKTTILLVILGLTLLFALSAA) form the signal peptide. Residues 22-29 (TELKDEER) constitute a propeptide that is removed on maturation. 3 cysteine pairs are disulfide-bonded: Cys-31/Cys-45, Cys-38/Cys-50, and Cys-44/Cys-57.

The protein belongs to the neurotoxin 10 (Hwtx-1) family. 32 (Jztx-16) subfamily. As to expression, expressed by the venom gland.

Its subcellular location is the secreted. Probable ion channel inhibitor. This Chilobrachys guangxiensis (Chinese earth tiger tarantula) protein is U11-theraphotoxin-Cg1a.